Here is a 333-residue protein sequence, read N- to C-terminus: Ribosomal RNA small subunit methyltransferase H (333 aa).

Residues 34–36, D59, F86, D112, and Q119 each bind S-adenosyl-L-methionine; that span reads GGH.

Belongs to the methyltransferase superfamily. RsmH family.

It is found in the cytoplasm. The catalysed reaction is cytidine(1402) in 16S rRNA + S-adenosyl-L-methionine = N(4)-methylcytidine(1402) in 16S rRNA + S-adenosyl-L-homocysteine + H(+). Functionally, specifically methylates the N4 position of cytidine in position 1402 (C1402) of 16S rRNA. This Prosthecochloris aestuarii (strain DSM 271 / SK 413) protein is Ribosomal RNA small subunit methyltransferase H.